Reading from the N-terminus, the 244-residue chain is Putative nucleosome assembly protein C36B7.08c (244 aa).

The segment at Glu-199–Asn-244 is disordered. Positions Met-201 to Lys-232 are enriched in acidic residues. Ser-211 is subject to Phosphoserine.

This sequence belongs to the nucleosome assembly protein (NAP) family.

It localises to the nucleus. This is Putative nucleosome assembly protein C36B7.08c from Schizosaccharomyces pombe (strain 972 / ATCC 24843) (Fission yeast).